A 193-amino-acid chain; its full sequence is UPF0301 protein SAV_5129 (193 aa).

Belongs to the UPF0301 (AlgH) family.

This Streptomyces avermitilis (strain ATCC 31267 / DSM 46492 / JCM 5070 / NBRC 14893 / NCIMB 12804 / NRRL 8165 / MA-4680) protein is UPF0301 protein SAV_5129.